We begin with the raw amino-acid sequence, 226 residues long: UPF0177 protein YbdJ (226 aa).

A run of 5 helical transmembrane segments spans residues 16–36 (LLLLLVTVILYNGWTPHLGIF), 43–63 (FAFNYYGFVDILTFLVIIVIA), 81–101 (LLFILFFIVGGNIFIALAHHL), 169–189 (FAWVHTGFTYSFFLYLPISLV), and 206–226 (LHSSINLINTYLPNLLSFWVF).

It belongs to the UPF0177 family.

Its subcellular location is the cell membrane. The chain is UPF0177 protein YbdJ (ybdJ) from Lactococcus lactis subsp. lactis (strain IL1403) (Streptococcus lactis).